Here is a 153-residue protein sequence, read N- to C-terminus: Putative nuclear shuttle protein (153 aa).

This sequence belongs to the nanoviridae nuclear shuttle protein family.

It is found in the host nucleus. Its subcellular location is the host cytoplasm. Its function is as follows. Putative nuclear shuttle protein. This Trifolium subterraneum (Subterranean clover) protein is Putative nuclear shuttle protein (DNA-N).